A 61-amino-acid polypeptide reads, in one-letter code: uncharacterized protein (61 aa).

A disordered region spans residues 1-40 (MRRGGEPQCDGREFRIASSPAREREDDNETAPPQTSAAQE). Basic and acidic residues predominate over residues 9-25 (CDGREFRIASSPARERE).

This is an uncharacterized protein from Caenorhabditis elegans.